Reading from the N-terminus, the 214-residue chain is Imidazole glycerol phosphate synthase subunit HisH (214 aa).

Positions 2–214 (RVALIDYGSG…LIANFLRWAP (213 aa)) constitute a Glutamine amidotransferase type-1 domain. Cys88 acts as the Nucleophile in catalysis. Active-site residues include His194 and Glu196.

In terms of assembly, heterodimer of HisH and HisF.

The protein localises to the cytoplasm. It catalyses the reaction 5-[(5-phospho-1-deoxy-D-ribulos-1-ylimino)methylamino]-1-(5-phospho-beta-D-ribosyl)imidazole-4-carboxamide + L-glutamine = D-erythro-1-(imidazol-4-yl)glycerol 3-phosphate + 5-amino-1-(5-phospho-beta-D-ribosyl)imidazole-4-carboxamide + L-glutamate + H(+). The enzyme catalyses L-glutamine + H2O = L-glutamate + NH4(+). It participates in amino-acid biosynthesis; L-histidine biosynthesis; L-histidine from 5-phospho-alpha-D-ribose 1-diphosphate: step 5/9. In terms of biological role, IGPS catalyzes the conversion of PRFAR and glutamine to IGP, AICAR and glutamate. The HisH subunit catalyzes the hydrolysis of glutamine to glutamate and ammonia as part of the synthesis of IGP and AICAR. The resulting ammonia molecule is channeled to the active site of HisF. This chain is Imidazole glycerol phosphate synthase subunit HisH, found in Rhodospirillum rubrum (strain ATCC 11170 / ATH 1.1.1 / DSM 467 / LMG 4362 / NCIMB 8255 / S1).